Reading from the N-terminus, the 201-residue chain is MARSVRVLVDMDGVLADFEAGLLRGFRRRFPEEPHVPLEQRRGFLAREQYRALRPDLADKVASVYEAPGFFLDLEPIPGALDAVREMNDLPDTQVFICTSPLLKYHHCVGEKYRWVEQHLGPQFVERIILTRDKTVVLGDLLIDDKDTVRGQEETPSWEHILFTCCHNRHLVLPPTRRRLLSWSDNWREILDSKRGAAQRE.

Catalysis depends on Asp-10, which acts as the Nucleophile. Mg(2+) contacts are provided by Asp-10 and Asp-12. The Proton donor role is filled by Asp-12. Residues Phe-18, Phe-44, Tyr-65, Thr-99, and Lys-134 each contribute to the substrate site. Residue Asp-145 coordinates Mg(2+). Ser-182 carries the post-translational modification Phosphoserine.

Belongs to the 5'(3')-deoxyribonucleotidase family. In terms of assembly, homodimer. The cofactor is Mg(2+). As to expression, detected in skeletal muscle, heart and pancreas.

The protein localises to the cytoplasm. In terms of biological role, dephosphorylates the 5' and 2'(3')-phosphates of deoxyribonucleotides, with a preference for dUMP and dTMP, intermediate activity towards dGMP, and low activity towards dCMP and dAMP. The polypeptide is 5'(3')-deoxyribonucleotidase, cytosolic type (NT5C) (Homo sapiens (Human)).